The sequence spans 499 residues: Putative DUF21 domain-containing protein At1g03270 (499 aa).

Residues 1 to 32 lie on the Extracellular side of the membrane; it reads MVVLSTLALVRAAYSLNSFVFEAEDIRFGSPW. Residues 29 to 211 enclose the CNNM transmembrane domain; the sequence is GSPWWFVVVG…GKGGELTHEE (183 aa). A helical transmembrane segment spans residues 33-53; sequence WFVVVGVACFLVLFAGIMSGL. Residues 54 to 91 are Cytoplasmic-facing; the sequence is TLGLMSLGLVELEILQQSGSSAEKKQAAAILPVVKKQH. Residues 92 to 112 traverse the membrane as a helical segment; sequence QLLVTLLLCNAAAMEALPICL. Over 113-114 the chain is Extracellular; that stretch reads DK. The chain crosses the membrane as a helical span at residues 115-135; the sequence is IFHPFVAVLLSVTFVLAFGEI. Over 136–145 the chain is Cytoplasmic; it reads IPQAICSRYG. A helical transmembrane segment spans residues 146-166; sequence LAVGANFLWLVRILMIICYPI. Over 167–499 the chain is Extracellular; the sequence is AYPIGKVLDA…TEPLLAESDR (333 aa). Asn-181 carries an N-linked (GlcNAc...) asparagine glycan. CBS domains are found at residues 230 to 291, 295 to 359, and 365 to 431; these read MTPI…EAPV, SIRK…SNLT, and HESH…IVDE. Asn-357, Asn-391, and Asn-484 each carry an N-linked (GlcNAc...) asparagine glycan.

It is found in the membrane. This chain is Putative DUF21 domain-containing protein At1g03270 (CBSDUF4), found in Arabidopsis thaliana (Mouse-ear cress).